The primary structure comprises 129 residues: Small ribosomal subunit protein eS6 (129 aa).

The segment at 106-129 (QINASIVSRGEQSIDDLLGGEDDE) is disordered.

This sequence belongs to the eukaryotic ribosomal protein eS6 family.

This is Small ribosomal subunit protein eS6 from Natronomonas pharaonis (strain ATCC 35678 / DSM 2160 / CIP 103997 / JCM 8858 / NBRC 14720 / NCIMB 2260 / Gabara) (Halobacterium pharaonis).